Consider the following 405-residue polypeptide: MKSRSNVLSIVLAGGEGKRLYPFTADRAKPAVPFGGNYRLIDFVLSNLVNAGYYKICVLTQYKSHSLDRHISQSWQLSGLTGQYITPVPAQQRLGKRWFTGSADAILQSLNLVYDEQPDYIIVFGADHVYRMDPEQMVQEHIKAGAGVTVAGLRVPRHEATAFGVIQADDDNKIEQFLEKPAEPPSVPDDPEVSFASMGNYVFTAQTLIDALKEDSEDENSNHDMGGDIIPRLVDRGEAYVYDFSNNYVPGETERDKGYWRDVGTVDAFYEAHMDLISVHPVFNLYNQQWPIHTAETGNLPPAKFVKGGIAQSSMVSAGCIISAGTVRNSVLSENVVVEEGASVEGCVIMPGVRIGRGAVVRHAIIDKNVQVSAGEIIGVDRARDQDRFTISKGGVVCIGKNVVV.

Alpha-D-glucose 1-phosphate contacts are provided by residues G164, 179 to 180, and S197; that span reads EK.

The protein belongs to the bacterial/plant glucose-1-phosphate adenylyltransferase family. Homotetramer.

The enzyme catalyses alpha-D-glucose 1-phosphate + ATP + H(+) = ADP-alpha-D-glucose + diphosphate. It functions in the pathway glycan biosynthesis; glycogen biosynthesis. Involved in the biosynthesis of ADP-glucose, a building block required for the elongation reactions to produce glycogen. Catalyzes the reaction between ATP and alpha-D-glucose 1-phosphate (G1P) to produce pyrophosphate and ADP-Glc. This chain is Glucose-1-phosphate adenylyltransferase, found in Corynebacterium jeikeium (strain K411).